Reading from the N-terminus, the 1169-residue chain is C5a peptidase (1169 aa).

The signal sequence occupies residues 1–31; it reads MRKKQKLPFDKLAIALMSTSILLNAQSDIKA. Residues 33-111 form a disordered region; it reads TVTEDTPATE…ETIRDLNDPS (79 aa). The segment covering 48–67 has biased composition (polar residues); that stretch reads PQQTAVSEEAPSSSSKETNP. The Peptidase S8 domain maps to 101–583; that stretch reads KETIRDLNDP…AGAVDAKKAS (483 aa). Over residues 102–111 the composition is skewed to basic and acidic residues; it reads ETIRDLNDPS. Catalysis depends on charge relay system residues aspartate 132, histidine 195, and serine 514. The tract at residues 1028–1135 is disordered; that stretch reads NLLEGHSNKP…RDQLPTTNDK (108 aa). Composition is skewed to basic and acidic residues over residues 1033–1056, 1063–1073, and 1080–1092; these read HSNK…KPEQ, PDKKPEAKPEQ, and PDKK…EKDS. 4 tandem repeats follow at residues 1036 to 1052, 1053 to 1069, 1070 to 1086, and 1087 to 1103. The segment at 1036 to 1103 is 4 X 17 AA tandem repeats; the sequence is KPEQDGSDQV…GQTPGKTPQK (68 aa). Residues 1093–1108 are compositionally biased toward polar residues; that stretch reads SGQTPGKTPQKGQPSR. The LPXTG sorting signal motif lies at 1129-1133; that stretch reads LPTTN. A Pentaglycyl murein peptidoglycan amidated threonine modification is found at threonine 1132. Positions 1133-1169 are cleaved as a propeptide — removed by sortase; it reads NDKDTNRLHLLKLVMTTFFFGLVAHIFKTKRQKETKK.

This sequence belongs to the peptidase S8 family. Cleaved by SpeB protease; leading to its degradation. Degradation by SpeB is probably strictly regulated to preserve integrity of C5a peptidase.

It is found in the secreted. It localises to the cell wall. It carries out the reaction The primary cleavage site is at 67-His-|-Lys-68 in human C5a with a minor secondary cleavage site at 58-Ala-|-Ser-59.. Its function is as follows. This virulence factor of S.pyogenes specifically cleaves the human serum chemotaxin C5a at '68-Lys-|-Asp-69' bond near its C-terminus, destroying its ability to serve as a chemoattractant. This Streptococcus pyogenes serotype M3 (strain ATCC BAA-595 / MGAS315) protein is C5a peptidase (scpA).